We begin with the raw amino-acid sequence, 315 residues long: Ribosomal RNA small subunit methyltransferase H (315 aa).

Residues 37-39, aspartate 57, aspartate 105, and glutamine 112 contribute to the S-adenosyl-L-methionine site; that span reads GGH.

It belongs to the methyltransferase superfamily. RsmH family.

Its subcellular location is the cytoplasm. The catalysed reaction is cytidine(1402) in 16S rRNA + S-adenosyl-L-methionine = N(4)-methylcytidine(1402) in 16S rRNA + S-adenosyl-L-homocysteine + H(+). In terms of biological role, specifically methylates the N4 position of cytidine in position 1402 (C1402) of 16S rRNA. This chain is Ribosomal RNA small subunit methyltransferase H, found in Nitrosococcus oceani (strain ATCC 19707 / BCRC 17464 / JCM 30415 / NCIMB 11848 / C-107).